Reading from the N-terminus, the 1129-residue chain is Large proline-rich protein bag6 (1129 aa).

Residues M1–T76 form the Ubiquitin-like domain. Disordered stretches follow at residues V69 to N108, Q187 to E235, T347 to P402, P490 to A518, G550 to S606, V654 to P692, V942 to A967, and V987 to A1009. Residues P73–P105 show a composition bias toward low complexity. Polar residues-rich tracts occupy residues R209–S232 and H364–S383. Composition is skewed to low complexity over residues T553–P593 and P655–Q666. Residues A667 to A686 are compositionally biased toward pro residues. Polar residues predominate over residues E947–E956.

In terms of assembly, component of the bag6/bat3 complex.

The protein localises to the cytoplasm. The protein resides in the cytosol. It localises to the nucleus. Its subcellular location is the secreted. It is found in the extracellular exosome. In terms of biological role, ATP-independent molecular chaperone preventing the aggregation of misfolded and hydrophobic patches-containing proteins. Functions as part of a cytosolic protein quality control complex, the bag6/bat3 complex, which maintains these client proteins in a soluble state and participates in their proper delivery to the endoplasmic reticulum or alternatively can promote their sorting to the proteasome where they undergo degradation. The bag6/bat3 complex is involved in the post-translational delivery of tail-anchored/type II transmembrane proteins to the endoplasmic reticulum membrane. Similarly, the bag6/bat3 complex also functions as a sorting platform for proteins of the secretory pathway that are mislocalized to the cytosol either delivering them to the proteasome for degradation or to the endoplasmic reticulum. The bag6/bat3 complex also plays a role in the endoplasmic reticulum-associated degradation (ERAD), a quality control mechanism that eliminates unwanted proteins of the endoplasmic reticulum through their retrotranslocation to the cytosol and their targeting to the proteasome. It maintains these retrotranslocated proteins in an unfolded yet soluble state condition in the cytosol to ensure their proper delivery to the proteasome. Also required for selective ubiquitin-mediated degradation of defective nascent chain polypeptides by the proteasome. Also involved in endoplasmic reticulum stress-induced pre-emptive quality control, a mechanism that selectively attenuates the translocation of newly synthesized proteins into the endoplasmic reticulum and reroutes them to the cytosol for proteasomal degradation. May ensure the proper degradation of these proteins and thereby protects the endoplasmic reticulum from protein overload upon stress. By stabilizing a large spectrum of proteins, may indirectly affect different biological processes including apoptosis. By controlling the steady-state expression of the IGF1R receptor, indirectly regulates the insulin-like growth factor receptor signaling pathway. When nuclear, may also act as a component of some chromatin regulator complex. The polypeptide is Large proline-rich protein bag6 (Xenopus tropicalis (Western clawed frog)).